The chain runs to 118 residues: UPF0342 protein LCK_01004 (118 aa).

The protein belongs to the UPF0342 family.

The protein is UPF0342 protein LCK_01004 of Leuconostoc citreum (strain KM20).